A 586-amino-acid chain; its full sequence is Dihydroxy-acid dehydratase 2 (586 aa).

Cys-68 is a [2Fe-2S] cluster binding site. Asp-100 is a binding site for Mg(2+). Cys-141 serves as a coordination point for [2Fe-2S] cluster. The Mg(2+) site is built by Asp-142 and Lys-143. Lys-143 carries the N6-carboxylysine modification. Cys-213 is a binding site for [2Fe-2S] cluster. Residue Glu-463 participates in Mg(2+) binding. Ser-489 functions as the Proton acceptor in the catalytic mechanism.

It belongs to the IlvD/Edd family. Homodimer. It depends on [2Fe-2S] cluster as a cofactor. The cofactor is Mg(2+).

The catalysed reaction is (2R)-2,3-dihydroxy-3-methylbutanoate = 3-methyl-2-oxobutanoate + H2O. It catalyses the reaction (2R,3R)-2,3-dihydroxy-3-methylpentanoate = (S)-3-methyl-2-oxopentanoate + H2O. The protein operates within amino-acid biosynthesis; L-isoleucine biosynthesis; L-isoleucine from 2-oxobutanoate: step 3/4. Its pathway is amino-acid biosynthesis; L-valine biosynthesis; L-valine from pyruvate: step 3/4. In terms of biological role, functions in the biosynthesis of branched-chain amino acids. Catalyzes the dehydration of (2R,3R)-2,3-dihydroxy-3-methylpentanoate (2,3-dihydroxy-3-methylvalerate) into 2-oxo-3-methylpentanoate (2-oxo-3-methylvalerate) and of (2R)-2,3-dihydroxy-3-methylbutanoate (2,3-dihydroxyisovalerate) into 2-oxo-3-methylbutanoate (2-oxoisovalerate), the penultimate precursor to L-isoleucine and L-valine, respectively. The protein is Dihydroxy-acid dehydratase 2 of Mesorhizobium japonicum (strain LMG 29417 / CECT 9101 / MAFF 303099) (Mesorhizobium loti (strain MAFF 303099)).